Reading from the N-terminus, the 1053-residue chain is Zinc finger and BTB domain-containing protein 11 (1053 aa).

The span at 141–156 (LDLESGEESNESEDDL) shows a compositional bias: acidic residues. Residues 141 to 173 (LDLESGEESNESEDDLSNFTSSPTTASKPAKKK) form a disordered region. A compositionally biased stretch (low complexity) spans 157–168 (SNFTSSPTTASK). Residues 214–282 (CDVTLLIEGE…AYTSVLSFDF (69 aa)) enclose the BTB domain. The segment at 546 to 566 (LVQRGKKMKQPKRDAKENTEE) is disordered. The span at 556–566 (PKRDAKENTEE) shows a compositional bias: basic and acidic residues. 2 consecutive C2H2-type zinc fingers follow at residues 569 to 591 (HKCGECGMVFQRRYALIMHKLKH) and 597 to 619 (YKCPLCKKQFQYSASLRAHLIRH). Positions 619-643 (HTRKDAPSSSSSNSTSNEASGTSSE) are disordered. Low complexity predominate over residues 626–642 (SSSSSNSTSNEASGTSS). 10 C2H2-type zinc fingers span residues 651 to 673 (FICSICGRTLPKLYSLRIHMLKH), 679 to 701 (HACQVCGKTFIYKHGLKLHQSLH), 707 to 729 (FQCELCVKSFVTKRSLQEHMSIH), 735 to 757 (YLCSVCGKSFHRGSGLSKHFKKH), 766 to 788 (YHCTQCEKSFFEARDLRQHMNKH), 794 to 816 (FQCQFCDKCYSWKKDWYSHVKSH), 822 to 846 (YRCNICGKEFYEKALFRRHVKKATH), 858 to 880 (RVCEKCGRKFTQLREYRRHMNNH), 886 to 908 (FECLTCGVAWADARSLKRHVRTH), and 914 to 937 (YVCPVCSEAYIDARTLRKHMTKFH). A Glycyl lysine isopeptide (Lys-Gly) (interchain with G-Cter in SUMO2) cross-link involves residue Lys-1043. Phosphoserine is present on Ser-1050.

The protein resides in the nucleus. It is found in the nucleolus. Functionally, may be involved in transcriptional regulation. The chain is Zinc finger and BTB domain-containing protein 11 from Homo sapiens (Human).